We begin with the raw amino-acid sequence, 400 residues long: Putative niacin/nicotinamide transporter NiaP (400 aa).

Topologically, residues 1-14 are cytoplasmic; it reads MGKQQPISQRKLLG. Residues 15 to 35 form a helical membrane-spanning segment; sequence VAGLGWLFDAMDVGILSFIIA. Residues 36–49 are Extracellular-facing; sequence ALHVEWNLSPEEMK. The helical transmembrane segment at 50-70 threads the bilayer; it reads WIGSVNSIGMAAGAFLFGLLA. Residues 71–77 lie on the Cytoplasmic side of the membrane; the sequence is DRIGRKK. Helical transmembrane passes span 78 to 98 and 99 to 119; these read VFIITLLCFSIGSGISAFVTS and LSAFLILRFVIGMGLGGELPV. The Cytoplasmic portion of the chain corresponds to 120-142; the sequence is ASTLVSEAVVPEKRGRVIVLLES. Residues 143–163 form a helical membrane-spanning segment; the sequence is FWAVGWLAAALISYFVIPSFG. Topologically, residues 164-165 are extracellular; that stretch reads WQ. A helical membrane pass occupies residues 166-186; it reads AALLLTALTAFYALYLRTSLP. The Cytoplasmic portion of the chain corresponds to 187–217; sequence DSPKYESLSAKKRSMWENVKSVWARQYIRPT. Residues 218-238 form a helical membrane-spanning segment; the sequence is VMLSIVWFCVVFSYYGMFLWL. Residues 239 to 253 are Extracellular-facing; that stretch reads PSVMLLKGFSMIQSF. A helical membrane pass occupies residues 254–274; the sequence is EYVLLMTLAQLPGYFSAAWLI. Topologically, residues 275–280 are cytoplasmic; the sequence is EKAGRK. Residues 281–301 traverse the membrane as a helical segment; that stretch reads WILVVYLIGTAGSAYFFGTAD. The Extracellular portion of the chain corresponds to 302 to 304; sequence SLS. A helical membrane pass occupies residues 305-325; sequence LLLTAGVLLSFFNLGAWGVLY. The Cytoplasmic segment spans residues 326 to 343; the sequence is AYTPEQYPTAIRATGSGT. The chain crosses the membrane as a helical span at residues 344–364; that stretch reads TAAFGRIGGIFGPLLVGTLAA. The Extracellular segment spans residues 365–370; it reads RHISFS. Residues 371-391 traverse the membrane as a helical segment; it reads VIFSIFCIAILLAVACILIMG. The Cytoplasmic portion of the chain corresponds to 392–400; that stretch reads KETKQTELE.

It belongs to the major facilitator superfamily. Sugar transporter (TC 2.A.1.1) family.

It localises to the cell membrane. In terms of biological role, probably involved in the uptake of amidated and deamidated forms of niacin. Increases the growth rate of E.coli that is unable to make niacin de novo; confers increased sensitivity to the toxic niacin analog 6-amino-nicotinamide to wild-type E.coli. There is probably another mechanism for niacin uptake. The chain is Putative niacin/nicotinamide transporter NiaP from Bacillus subtilis (strain 168).